Consider the following 155-residue polypeptide: Ribosome maturation factor RimP (155 aa).

The protein belongs to the RimP family.

The protein resides in the cytoplasm. In terms of biological role, required for maturation of 30S ribosomal subunits. The sequence is that of Ribosome maturation factor RimP from Prochlorococcus marinus subsp. pastoris (strain CCMP1986 / NIES-2087 / MED4).